The chain runs to 423 residues: ATP-dependent Clp protease ATP-binding subunit ClpX (423 aa).

The region spanning 1 to 50 (MTDDTEYRCSFCGKEHHQVDDLIAGPDVRICSECVVLSCEIVEDRRNEAL) is the ClpX-type ZB domain. Zn(2+)-binding residues include C9, C12, C31, and C34. 126–133 (PTGCGKTY) provides a ligand contact to ATP.

The protein belongs to the ClpX chaperone family. As to quaternary structure, component of the ClpX-ClpP complex. Forms a hexameric ring that, in the presence of ATP, binds to fourteen ClpP subunits assembled into a disk-like structure with a central cavity, resembling the structure of eukaryotic proteasomes.

In terms of biological role, ATP-dependent specificity component of the Clp protease. It directs the protease to specific substrates. Can perform chaperone functions in the absence of ClpP. This Tropheryma whipplei (strain Twist) (Whipple's bacillus) protein is ATP-dependent Clp protease ATP-binding subunit ClpX.